The following is a 61-amino-acid chain: Large ribosomal subunit protein uL29 (61 aa).

It belongs to the universal ribosomal protein uL29 family.

This Nitratidesulfovibrio vulgaris (strain ATCC 29579 / DSM 644 / CCUG 34227 / NCIMB 8303 / VKM B-1760 / Hildenborough) (Desulfovibrio vulgaris) protein is Large ribosomal subunit protein uL29.